The sequence spans 309 residues: MTFPAFLSPDPTWDGDSTGGPLLLTVRFSASIPDFPLDIENPDITTAAGLKQLIRTHLPPNLSSHRLRLIYAGRGLEDATPLSVSLKLPPSPSRTPVVQEDATTVKGKGKAPIREQPRLYIHCSIGDIVLSDADLAAEAAIATTLQQEQADEGYTGRKKQQQPPPSTTSAPRGFDRLLSAGFTPSEVSALRSQFMAIQSVSRTPDTMPTGAELRELEDRWMDEGSSAMAAGVPGGGEGISFADDDGGFGAGSRGAMDDMLWGAVMGFFWPVGCAMWLRREEGVWSWRKGLAVFVGVVINVAFGAMRIMN.

Asn-61 carries an N-linked (GlcNAc...) asparagine glycan. 2 disordered regions span residues 88 to 110 and 148 to 177; these read LPPSPSRTPVVQEDATTVKGKGK and EQADEGYTGRKKQQQPPPSTTSAPRGFDRL. The next 2 membrane-spanning stretches (helical) occupy residues 257–277 and 289–309; these read DDMLWGAVMGFFWPVGCAMWL and GLAVFVGVVINVAFGAMRIMN.

It belongs to the dsc3 family. Component of the DSC E3 ubiquitin ligase complex composed of dscA, dscB, dscC and dscD.

It is found in the endoplasmic reticulum membrane. It functions in the pathway protein modification; protein ubiquitination. Functionally, component of the DSC E3 ubiquitin ligase complex which is required for the srbA transcriptional activator proteolytic cleavage to release the soluble transcription factor from the membrane in low oxygen or sterol conditions. Required for growth during hypoxia and triazole drug susceptibility, as well as for virulence in a murine model of invasive pulmonary aspergillosis (IPA). In Aspergillus fumigatus (strain CBS 144.89 / FGSC A1163 / CEA10) (Neosartorya fumigata), this protein is DSC E3 ubiquitin ligase complex subunit C.